A 149-amino-acid chain; its full sequence is Large ribosomal subunit protein uL30 (149 aa).

Belongs to the universal ribosomal protein uL30 family. Part of the 50S ribosomal subunit.

This chain is Large ribosomal subunit protein uL30, found in Methanopyrus kandleri (strain AV19 / DSM 6324 / JCM 9639 / NBRC 100938).